The chain runs to 184 residues: Non-fimbrial adhesin 1 (184 aa).

The N-terminal stretch at 1 to 28 (MKAKKYENQIYNENGRRCQRHGRRLAIA) is a signal peptide. Cys-57 and Cys-91 form a disulfide bridge.

Forms a polymeric structure, which disintegrates with elevated temperature into a monomer but with some relatively stable dimers.

This is Non-fimbrial adhesin 1 (nfaA) from Escherichia coli.